The chain runs to 50 residues: Bacteriocin BacSp222 (50 aa).

Methionine 1 is modified (N-formylmethionine).

The protein localises to the secreted. Functionally, has bacteriolytic activity against Gram-positive bacteria B.subtilis, L.lactis and M.luteus and several species from genus Staphylococcus including methicillin-resistant S.aureus, with MIC values ranging from 0.11 uM to 7.8 uM. Has no activity against Gram-negative bacteria or fungi. In vitro, has a dose-dependent cytolytic effect on eukaryotic cells. This is Bacteriocin BacSp222 from Staphylococcus pseudintermedius.